The sequence spans 124 residues: Histone H2B (124 aa).

The tract at residues 1–33 (MPEPAKSAPKKGSKKAVTKTAGKGGKKRKRSRK) is disordered. Residues K6 and K11 each carry the N6-acetyllysine modification. The span at 8–17 (APKKGSKKAV) shows a compositional bias: basic residues. S13 is modified (phosphoserine). An N6-acetyllysine mark is found at K14 and K19. A glycan (O-linked (GlcNAc) serine) is linked at S111. K119 participates in a covalent cross-link: Glycyl lysine isopeptide (Lys-Gly) (interchain with G-Cter in ubiquitin).

This sequence belongs to the histone H2B family. As to quaternary structure, the nucleosome is a histone octamer containing two molecules each of H2A, H2B, H3 and H4 assembled in one H3-H4 heterotetramer and two H2A-H2B heterodimers. The octamer wraps approximately 147 bp of DNA. Monoubiquitination of Lys-119 by BRE1 gives a specific tag for epigenetic transcriptional activation and is also prerequisite for histone H3 'Lys-4' and 'Lys-79' methylation. Post-translationally, phosphorylated during apoptosis; which facilitates apoptotic chromatin condensation. In terms of processing, glcNAcylation at Ser-111 promotes monoubiquitination of Lys-119. It fluctuates in response to extracellular glucose, and associates with transcribed genes.

It is found in the nucleus. It localises to the chromosome. In terms of biological role, core component of nucleosome. Nucleosomes wrap and compact DNA into chromatin, limiting DNA accessibility to the cellular machineries which require DNA as a template. Histones thereby play a central role in transcription regulation, DNA repair, DNA replication and chromosomal stability. DNA accessibility is regulated via a complex set of post-translational modifications of histones, also called histone code, and nucleosome remodeling. The chain is Histone H2B from Oncorhynchus mykiss (Rainbow trout).